We begin with the raw amino-acid sequence, 1161 residues long: Translation initiation factor IF-2 (1161 aa).

A disordered region spans residues 67 to 561 (KSSFKAANEQ…RRAMELRAAK (495 aa)). Positions 83–105 (QNKDSNSRSKPLNKEKPSKESLN) are enriched in basic and acidic residues. Positions 139–154 (SRISNLQSQVLPNSHN) are enriched in polar residues. 2 stretches are compositionally biased toward basic and acidic residues: residues 164 to 180 (NPNE…EKKS) and 211 to 220 (KDIKANKKND). Low complexity-rich tracts occupy residues 224–250 (NQRP…PRIK) and 268–282 (NSNR…PPSN). Composition is skewed to polar residues over residues 295 to 311 (RQVT…QGVS), 352 to 362 (RQGAPNRQGSP), and 380 to 393 (LNRS…QNPS). Over residues 412 to 432 (ASDKEKLNRSNFEKQKVEPPK) the composition is skewed to basic and acidic residues. A compositionally biased stretch (polar residues) spans 440–461 (SRLNASPTAKKTPHRSFTNNSK). 2 stretches are compositionally biased toward basic and acidic residues: residues 464-478 (GRSD…EALR) and 543-561 (KETT…RAAK). The region spanning 653–830 (KRPPVITVMG…EVEDLQANPE (178 aa)) is the tr-type G domain. The tract at residues 662-669 (GHVDHGKT) is G1. 662-669 (GHVDHGKT) lines the GTP pocket. The tract at residues 687–691 (GITQH) is G2. The tract at residues 712–715 (DTPG) is G3. GTP-binding positions include 712–716 (DTPGH) and 766–769 (NKID). The segment at 766-769 (NKID) is G4. The tract at residues 802 to 804 (SAI) is G5.

The protein belongs to the TRAFAC class translation factor GTPase superfamily. Classic translation factor GTPase family. IF-2 subfamily.

It localises to the cytoplasm. Functionally, one of the essential components for the initiation of protein synthesis. Protects formylmethionyl-tRNA from spontaneous hydrolysis and promotes its binding to the 30S ribosomal subunits. Also involved in the hydrolysis of GTP during the formation of the 70S ribosomal complex. The polypeptide is Translation initiation factor IF-2 (Prochlorococcus marinus (strain MIT 9515)).